The chain runs to 1508 residues: uncharacterized protein (1508 aa).

The stretch at 149-267 (ARRQQWRLRR…ARSLQEHRAT (119 aa)) forms a coiled coil. 5 disordered regions span residues 248-268 (ERSE…RATE), 345-403 (SQDW…LAGS), 536-575 (FLKK…GKNL), 725-754 (GLEE…SQEH), and 868-916 (EAKS…AEPW). The span at 868 to 881 (EAKSKESGEGDKPG) shows a compositional bias: basic and acidic residues. Residues 972-1034 (ISRLERDNHR…KGNLGQLQKA (63 aa)) are a coiled coil. Disordered stretches follow at residues 1158-1186 (LAAG…LVWR) and 1204-1246 (KEAH…EEDP). The span at 1163–1172 (TGPSTGTGNS) shows a compositional bias: polar residues. Residues 1204–1215 (KEAHLEKEEKRP) show a composition bias toward basic and acidic residues. Positions 1220-1230 (AQGQALSSLSN) are enriched in polar residues. Positions 1271 to 1302 (HQASLDEATRLQEELQAKLEELQKKQHEAKLA) form a coiled coil.

This is an uncharacterized protein from Homo sapiens (Human).